The sequence spans 188 residues: Heterodisulfide reductase subunit C-like protein (188 aa).

4Fe-4S ferredoxin-type domains lie at 34 to 64 (KELG…FEWY) and 78 to 109 (DELL…FEVM). The [4Fe-4S] cluster site is built by Cys44, Cys47, Cys50, Cys54, Cys89, Cys92, Cys95, and Cys99.

This sequence belongs to the HdrC family. The heterodisulfide reductase is composed of three subunits; HdlA, HdlB and HdlC. It forms a complex with the F420-non-reducing hydrogenase (Mvh), which provides the reducing equivalents to the heterodisulfide reductase.

The protein localises to the cytoplasm. In terms of biological role, has oxidoreductase activity. The Hdl and Mvh subunits may together mediate electron transfer from hydrogen to an unidentified electron acceptor on the cytoplasmic side of the membrane. In Archaeoglobus profundus (strain DSM 5631 / JCM 9629 / NBRC 100127 / Av18), this protein is Heterodisulfide reductase subunit C-like protein (hdlC).